The sequence spans 247 residues: Small ribosomal subunit protein uS2 (247 aa).

It belongs to the universal ribosomal protein uS2 family.

The polypeptide is Small ribosomal subunit protein uS2 (Cupriavidus metallidurans (strain ATCC 43123 / DSM 2839 / NBRC 102507 / CH34) (Ralstonia metallidurans)).